A 298-amino-acid chain; its full sequence is UPF0282 protein Kcr_0286 (298 aa).

The protein belongs to the UPF0282 family.

The chain is UPF0282 protein Kcr_0286 from Korarchaeum cryptofilum (strain OPF8).